The chain runs to 368 residues: Aminomethyltransferase (368 aa).

The protein belongs to the GcvT family. As to quaternary structure, the glycine cleavage system is composed of four proteins: P, T, L and H.

The catalysed reaction is N(6)-[(R)-S(8)-aminomethyldihydrolipoyl]-L-lysyl-[protein] + (6S)-5,6,7,8-tetrahydrofolate = N(6)-[(R)-dihydrolipoyl]-L-lysyl-[protein] + (6R)-5,10-methylene-5,6,7,8-tetrahydrofolate + NH4(+). Functionally, the glycine cleavage system catalyzes the degradation of glycine. This Xylella fastidiosa (strain M23) protein is Aminomethyltransferase.